Consider the following 114-residue polypeptide: Lectin MVL (114 aa).

The stretch at 2-55 is repeat 1; sequence ASYKVNIPAGPLWSNAEAQQVGPKIAAAHQGNFTGQWTTVVESAMSVVEVELQV. A carbohydrate contacts are provided by residues 12 to 16, Q20, and 36 to 44; these read PLWSN and GQWTTVVES. The linker stretch occupies residues 56–60; it reads ENTGI. Repeat unit 2 spans residues 61 to 114; the sequence is HEFKTDVLAGPLWSNDEAQKLGPQIAASYGAEFTGQWRTIVEGVMSVIQIKYTF. A carbohydrate is bound by residues 71 to 75, Q79, and 95 to 103; these read PLWSN and GQWRTIVEG.

In terms of assembly, homodimer.

It localises to the cytoplasm. Its function is as follows. Carbohydrate-binding protein that binds oligomannosides such as Man(6)GlcNAc(2) with sub-micromolar affinities. The specificity of MVL is unique in that its minimal target comprises the Man-alpha-(1-&gt;6)-Man-beta-(1-&gt;4)-GlcNAc-beta-(1-&gt;4)-GlcNAc tetrasaccharide core (Man(2)A) found in N-linked oligomannosides. Displays hemagglutininating activity on rabbit, horse and hen erythrocytes. This activity is inhibited by yeast mannan. Does not bind mono- and disaccharides. Inhibits HIV-1 envelope-mediated cell fusion at nanomolar concentrations through carbohydrate-mediated interactions with high-mannose residues on the surface of the HIV envelope glycoprotein gp120. Functionally, unexpectedly for a lectin, one of the 2 oligomannose binding sites of MVL can catalyze the cleavage of chitin fragments (such as chitotriose, i.e. GlcNAc(3) or GlcNAc-beta-(1-&gt;4)-GlcNAcbeta-(1-&gt;4)-GlcNAc, and chitotetraose, i.e. GlcNAc(4)) to GlcNAc. This weak beta-1,4-glycosidase activity is restricted to the C-terminal carbohydrate-binding site. Does not cleave Man(3)GlcNAc(2) or the tetrasaccharide Man(2)A. The protein is Lectin MVL (mvl) of Microcystis viridis (Polycystis viridis).